Consider the following 135-residue polypeptide: Probable transporter XF_0766 (135 aa).

Transmembrane regions (helical) follow at residues 4–24 (YWYP…LLLL), 45–65 (AQDI…SVIF), 71–91 (VTVA…GLGT), and 114–134 (IVAT…MGVY).

Belongs to the TsuA/YedE (TC 9.B.102) family.

Its subcellular location is the cell inner membrane. The polypeptide is Probable transporter XF_0766 (Xylella fastidiosa (strain 9a5c)).